Reading from the N-terminus, the 224-residue chain is uncharacterized protein (224 aa).

Residues 1–17 (MFTILLYFLVLFWVTNA) form the signal peptide.

This is an uncharacterized protein from Caenorhabditis elegans.